Here is a 252-residue protein sequence, read N- to C-terminus: Short-chain dehydrogenase anuI (252 aa).

Residues Leu-18, Asp-65, Asn-92, Tyr-171, Lys-175, and Thr-206 each contribute to the NADP(+) site. Tyr-171 functions as the Proton acceptor in the catalytic mechanism. Tyr-171 serves as the catalytic Proton donor. Catalysis depends on Lys-175, which acts as the Lowers pKa of active site Tyr.

The protein belongs to the short-chain dehydrogenases/reductases (SDR) family.

Highly reducing polyketide synthase; part of the gene cluster that mediates the biosynthesis of annullatin D, an alkylated aromatic polyketide with a fused dihydrobenzofuran lactone ring system that exhibits potent agonistic activities toward the cannabinoid receptors. AnuI does not seem to play a role within the pathway. The annullatin backbone 2-hydroxymethyl-3-pentylphenol is assembled from one acetyl-CoA starter unit and 5 malonyl-CoA elongation units by cooperation of the highly reducing polyketide synthase anuA, the short-chain dehydrogenase anuB and the oxidoreductase anuC, before being hydroxylated at the C-5 alkyl chain by the cytochrome P450 monooxygenase anuE to form (8S)-annullatin E. The prenyltransferase anuH subsequently installs one isoprenyl group at the benzene ring to form (8S)-annullatin J. Enzymatic or nonenzymatic dihydro-benzofuran ring formation between the prenyl and the phenolic hydroxyl groups in (8S)-annullatin J results in two diastereomers (2S,9S)-annullatin H and compound 12. The intermediate (2S,9S)-annullatin H is then converted to (2S,9S)-annullatin D by the FAD-linked oxidoreductase anuG-catalyzed five-member lactone ring formation. The isomer 12 acts as a substrate for the short-chain dehydrogenase anuF and is oxidized to (2R)-annullatin F, which is subsequently acetylated by an acetyltransferase leading to (2R)-annullatin G formation. The remaining enzymes identified within the cluster, anuD, anuI and anuJ, seem not to be involved in annullatin biosynthesis. The chain is Short-chain dehydrogenase anuI from Penicillium roqueforti (strain FM164).